We begin with the raw amino-acid sequence, 206 residues long: MRKYYYWILLLLFLILSIYIKLIGGEQNIGFNVELFKLINYNQIATLNGLMVFLSKYGREYVWIPVTALLLIFKRTRKIGITLVISFVIAIVLGEVSKYVMAQLRPFNFVNPTYLLEPKPTDYSYPSGHALIVSTGAVTLLLTSPKWMWILGIIEAVLVSYSRVYVGVHWPLDVIAGWLLGSWISFLSVQIESTGPIKKIEQMLKA.

5 helical membrane passes run 5-25 (YYWI…LIGG), 53-73 (FLSK…LLIF), 79-99 (IGIT…VSKY), 138-158 (VTLL…EAVL), and 164-184 (VYVG…GSWI).

The protein resides in the cell membrane. The enzyme catalyses di-trans,octa-cis-undecaprenyl diphosphate + H2O = di-trans,octa-cis-undecaprenyl phosphate + phosphate + H(+). This chain is Undecaprenyl-diphosphatase (sepP), found in Sulfolobus acidocaldarius (strain ATCC 33909 / DSM 639 / JCM 8929 / NBRC 15157 / NCIMB 11770).